The primary structure comprises 842 residues: Oxysterol-binding protein-related protein 7 (842 aa).

The segment at 1-28 (MDFQERDPPFLPESAQSSKPSSAQQASE) is disordered. Over residues 14-27 (SAQSSKPSSAQQAS) the composition is skewed to low complexity. The 96-residue stretch at 47–142 (PERQEGHLLK…WVAQLRAHRL (96 aa)) folds into the PH domain. Thr171 carries the post-translational modification Phosphothreonine. Ser217, Ser226, Ser256, and Ser272 each carry phosphoserine. A disordered region spans residues 330–369 (DMHQGSELSRMGVSEASTGQRRLHSLSTSSDTTADSFSSL). A compositionally biased stretch (low complexity) spans 354-369 (SLSTSSDTTADSFSSL).

Belongs to the OSBP family. As to expression, expressed in epithelium of small and large intestines (at protein level). Expressed in stomach, duodenum, jejunum, ascending colon, spleen, thymus, lymph node, trachea and leukocytes.

The protein resides in the cytoplasm. Its subcellular location is the cytosol. The protein localises to the endoplasmic reticulum membrane. It localises to the cell membrane. The protein is Oxysterol-binding protein-related protein 7 (OSBPL7) of Homo sapiens (Human).